A 481-amino-acid chain; its full sequence is DNA primase DnaG (481 aa).

Residues 169–243 (DAILVVEGRA…DVDYVARAPD (75 aa)) form the Toprim domain. Glu-175, Asp-217, and Asp-219 together coordinate Mg(2+). Positions 275–393 (RRRNKLAAQA…ARKEREPSEF (119 aa)) are disordered. The span at 281 to 309 (AAQAAEKQAQAEAAQKAEAPAAAAPVQPQ) shows a compositional bias: low complexity. A compositionally biased stretch (basic and acidic residues) spans 312–393 (YQQKEYPQRE…ARKEREPSEF (82 aa)).

Belongs to the archaeal DnaG primase family. Forms a ternary complex with MCM helicase and DNA. Component of the archaeal exosome complex. It depends on Mg(2+) as a cofactor.

It catalyses the reaction ssDNA + n NTP = ssDNA/pppN(pN)n-1 hybrid + (n-1) diphosphate.. RNA polymerase that catalyzes the synthesis of short RNA molecules used as primers for DNA polymerase during DNA replication. Also part of the exosome, which is a complex involved in RNA degradation. Acts as a poly(A)-binding protein that enhances the interaction between heteromeric, adenine-rich transcripts and the exosome. In Methanocella arvoryzae (strain DSM 22066 / NBRC 105507 / MRE50), this protein is DNA primase DnaG.